Reading from the N-terminus, the 317-residue chain is Transcription factor EC (317 aa).

A necessary for transcriptional transactivation region spans residues 1–90 (MTFDCRVCDQ…GLTDAPCPSI (90 aa)). The bHLH domain occupies 110–163 (QKKDNHNLIERRRRYNINYRIKELGTLIPKSNDPDMRWNKGTILKASVDYIKWL). Residues 242 to 317 (TSPEFYEQAV…SLSSEDGDEL (76 aa)) form a necessary for transcriptional transactivation region.

This sequence belongs to the MiT/TFE family. In terms of assembly, homodimer. Forms heterodimers with MITF. Interacts with MITF. Forms heterodimers with TFE3. Expressed in osteoclast-like cells (at protein level). Expressed in cells of the mononuclear phagocyte lineage. Expressed in macrophages and in osteoclast-like cells.

It is found in the nucleus. Its function is as follows. Transcriptional regulator that acts as a repressor or an activator. Acts as a transcriptional transactivator on the proximal promoter region of the tartrate-resistant acid phosphatase (TRAP) E-box containing promoter. Collaborates with MITF in target gene activation. Acts as a transcriptional repressor on minimal promoter containing element F (that includes an E-box sequence). Binds to element F in an E-box sequence-specific manner. Acts as a transcriptional repressor on minimal promoter containing mu E3 enhancer sequence. Binds to mu E3 DNA sequence of the immunoglobulin heavy-chain gene enhancer. Binds DNA in a homo- or heterodimeric form. This chain is Transcription factor EC (Tfec), found in Mus musculus (Mouse).